A 1037-amino-acid chain; its full sequence is MWRCGGRQGLCVLRRLSGGHAHHRAWRWNSNRACERALQYKLGDKIHGFTVNQVTSVPELFLTAVKLTHDDTGARYLHLAREDTNNLFSVQFRTTPMDSTGVPHILEHTVLCGSQKYPCRDPFFKMLNRSLSTFMNAFTASDYTLYPFSTQNPKDFQNLLSVYLDATFFPCLRELDFWQEGWRLEHENPSDPQTPLVFKGVVFNEMKGAFTDNERIFSQHLQNRLLPDHTYSVVSGGDPLCIPELTWEQLKQFHATHYHPSNARFFTYGNFPLEQHLKQIHEEALSKFQKIEPSTVVPAQTPWDKPREFQITCGPDSFATDPSKQTTISVSFLLPDITDTFEAFTLSLLSSLLTSGPNSPFYKALIESGLGTDFSPDVGYNGYTREAYFSVGLQGIAEKDIETVRSLIDRTIDEVVEKGFEDDRIEALLHKIEIQMKHQSTSFGLMLTSYIASCWNHDGDPVELLKLGNQLAKFRQCLQENPKFLQEKVKQYFKNNQHKLTLSMRPDDKYHEKQAQVEATKLKQKVEALSPGDRQQIYEKGLELRSQQSKPQDASCLPALKVSDIEPTIPVTELDVVLTAGDIPVQYCAQPTNGMVYFRAFSSLNTLPEELRPYVPLFCSVLTKLGCGLLDYREQAQQIELKTGGMSASPHVLPDDSHMDTYEQGVLFSSLCLDRNLPDMMQLWSEIFNNPCFEEEEHFKVLVKMTAQELANGIPDSGHLYASIRAGRTLTPAGDLQETFSGMDQVRLMKRIAEMTDIKPILRKLPRIKKHLLNGDNMRCSVNATPQQMPQTEKAVEDFLRSIGRSKKERRPVRPHTVEKPVPSSSGGDAHVPHGSQVIRKLVMEPTFKPWQMKTHFLMPFPVNYVGECIRTVPYTDPDHASLKILARLMTAKFLHTEIREKGGAYGGGAKLSHNGIFTLYSYRDPNTIETLQSFGKAVDWAKSGKFTQQDIDEAKLSVFSTVDAPVAPSDKGMDHFLYGLSDEMKQAHREQLFAVSHDKLLAVSDRYLGTGKSTHGLAILGPENPKIAKDPSWIIQ.

A mitochondrion-targeting transit peptide spans 1-28 (MWRCGGRQGLCVLRRLSGGHAHHRAWRW). His-104 contributes to the Zn(2+) binding site. Catalysis depends on Glu-107, which acts as the Proton acceptor. His-108 provides a ligand contact to Zn(2+). Cys-119 and Cys-556 are disulfide-bonded. Glu-180 is an active-site residue. Glu-205 lines the Zn(2+) pocket. Lys-759 carries the post-translational modification N6-acetyllysine. Lys-770 carries the N6-acetyllysine; alternate modification. N6-succinyllysine; alternate is present on Lys-770. A compositionally biased stretch (basic residues) spans 804 to 814 (GRSKKERRPVR). The tract at residues 804–834 (GRSKKERRPVRPHTVEKPVPSSSGGDAHVPH) is disordered. Lys-849 carries the N6-succinyllysine modification. Lys-884 carries the post-translational modification N6-acetyllysine. N6-succinyllysine is present on Lys-946.

This sequence belongs to the peptidase M16 family. PreP subfamily. As to quaternary structure, monomer and homodimer; homodimerization is induced by binding of the substrate. Zn(2+) serves as cofactor. Post-translationally, a disulfide bond locks the enzyme in the closed conformation preventing substrate entry into the catalytic chamber. In terms of tissue distribution, widely expressed. Expressed at higher level in muscle and heart compared to brain, pancreas, liver, lung and placenta.

The protein localises to the mitochondrion. Its subcellular location is the mitochondrion matrix. Its activity is regulated as follows. Mainly exists in a closed and catalytically competent conformation but a closed-to-open switch allows substrate entry into the catalytic chamber. Substrate binding induces closure and dimerization. A disulfide bond may lock the enzyme in a closed conformation preventing substrate entry into the catalytic chamber, participating in redox regulation of the enzyme. Inhibited by metal-chelating agents. Inhibited by nickel and zinc excess, and slightly activated by manganese. Functionally, metalloendopeptidase of the mitochondrial matrix that functions in peptide cleavage and degradation rather than in protein processing. Has an ATP-independent activity. Specifically cleaves peptides in the range of 5 to 65 residues. Shows a preference for cleavage after small polar residues and before basic residues, but without any positional preference. Degrades the transit peptides of mitochondrial proteins after their cleavage. Also degrades other unstructured peptides. It is also able to degrade amyloid-beta protein 40, one of the peptides produced by APP processing, when it accumulates in mitochondrion. It is a highly efficient protease, at least toward amyloid-beta protein 40. Cleaves that peptide at a specific position and is probably not processive, releasing digested peptides intermediates that can be further cleaved subsequently. It is also able to degrade amyloid-beta protein 42. This is Presequence protease, mitochondrial from Homo sapiens (Human).